The following is a 362-amino-acid chain: Mitochondrial glycine transporter (362 aa).

Solcar repeat units lie at residues 22–108 (PDAT…MRTS), 132–236 (LTAM…FKND), and 269–354 (RSSI…LIKS). Transmembrane regions (helical) follow at residues 28–53 (LLAGAIAGLVSAVTLQPFDLLKTRLQ), 83–109 (GTLPSTLRTSIGAGLYFTTLSKMRTSW), 138–163 (LTTGFIARGIVGYITMPITIIKTRFE), 211–234 (GSVATLARDCPYAGLYVLTYEAFK), 273–299 (INSTAAVLAASTCTTITAPFDAIKTRL), and 329–347 (GLSLRLGRKGISAGISWCI).

It belongs to the mitochondrial carrier (TC 2.A.29) family. SLC25A38 subfamily.

Its subcellular location is the mitochondrion inner membrane. It carries out the reaction glycine(in) = glycine(out). Mitochondrial glycine transporter that imports glycine into the mitochondrial matrix. Plays an important role in providing glycine for the first enzymatic step in heme biosynthesis, the condensation of glycine with succinyl-CoA to produce 5-aminolevulinate (ALA) in the mitochondrial matrix. The chain is Mitochondrial glycine transporter from Candida albicans (strain SC5314 / ATCC MYA-2876) (Yeast).